The sequence spans 430 residues: Probable GPI-anchored adhesin-like protein PGA32 (430 aa).

The first 16 residues, Met-1 to Gly-16, serve as a signal peptide directing secretion. Disordered regions lie at residues Leu-88–Asn-195, Ile-232–Lys-257, Gly-278–Phe-302, and Ser-314–Asp-336. Low complexity-rich tracts occupy residues Thr-92–Ser-112 and Thr-122–Arg-135. Over residues Thr-141–Asn-167 the composition is skewed to polar residues. 2 stretches are compositionally biased toward low complexity: residues Ser-168–Ser-187 and Ala-233–Ala-253. Positions Tyr-289–Phe-302 are enriched in polar residues. Low complexity predominate over residues Ser-314 to Thr-335. Gly-401 carries GPI-anchor amidated glycine lipidation. Positions Asp-402 to Thr-430 are cleaved as a propeptide — removed in mature form.

It is found in the cell membrane. Putative adhesin which is involved in cell adhesion and virulence. The protein is Probable GPI-anchored adhesin-like protein PGA32 (PGA32) of Candida albicans (strain SC5314 / ATCC MYA-2876) (Yeast).